Here is a 405-residue protein sequence, read N- to C-terminus: L-carnitine CoA-transferase (405 aa).

Lysine 97 and arginine 104 together coordinate CoA. Residue aspartate 169 is the Nucleophile of the active site.

The protein belongs to the CoA-transferase III family. CaiB subfamily. In terms of assembly, homodimer.

It is found in the cytoplasm. It catalyses the reaction crotonobetainyl-CoA + (R)-carnitine = crotonobetaine + (R)-carnitinyl-CoA. It carries out the reaction 4-(trimethylamino)butanoyl-CoA + (R)-carnitine = (R)-carnitinyl-CoA + 4-(trimethylamino)butanoate. The protein operates within amine and polyamine metabolism; carnitine metabolism. In terms of biological role, catalyzes the reversible transfer of the CoA moiety from gamma-butyrobetainyl-CoA to L-carnitine to generate L-carnitinyl-CoA and gamma-butyrobetaine. Is also able to catalyze the reversible transfer of the CoA moiety from gamma-butyrobetainyl-CoA or L-carnitinyl-CoA to crotonobetaine to generate crotonobetainyl-CoA. The chain is L-carnitine CoA-transferase from Salmonella choleraesuis (strain SC-B67).